Here is a 395-residue protein sequence, read N- to C-terminus: Phosphoprotein (395 aa).

Disordered regions lie at residues 34–104 (VGRS…ADEA), 126–179 (NKSS…GTDA), and 192–214 (LSAG…PAPV). The span at 65-74 (TPDRQDRSDK) shows a compositional bias: basic and acidic residues. Polar residues-rich tracts occupy residues 89–98 (PATSTDQPPT) and 147–178 (PTQQ…QGTD). Residues 222–285 (DFVQAMMSMM…LGMMKILDPG (64 aa)) are multimerization.

It belongs to the rubulavirus/avulavirus P protein family. As to quaternary structure, homotetramer. Interacts (via multimerization domain) with polymerase L; this interaction forms the polymerase L-P complex. Interacts (via N-terminus) with N0 (via Ncore); this interaction allows P to chaperon N0 to avoid N polymerization before encapsidation. Interacts (via C-terminus) with N-RNA template; this interaction positions the polymerase on the template for both transcription and replication.

Its function is as follows. Essential cofactor of the RNA polymerase L that plays a central role in the transcription and replication by forming the polymerase complex with RNA polymerase L and recruiting L to the genomic N-RNA template for RNA synthesis. Also plays a central role in the encapsidation of nascent RNA chains by forming the encapsidation complex with the nucleocapsid protein N (N-P complex). Acts as a chaperone for newly synthesized free N protein, so-called N0, allowing encapsidation of nascent RNA chains during replication. The nucleoprotein protein N prevents excessive phosphorylation of P, which leads to down-regulation of viral transcription/ replication. Participates, together with N, in the formation of viral factories (viroplasms), which are large inclusions in the host cytoplasm where replication takes place. In Newcastle disease virus (strain Ulster/2C) (NDV), this protein is Phosphoprotein (P/V).